The chain runs to 187 residues: RNA pyrophosphohydrolase (187 aa).

The region spanning 6 to 149 is the Nudix hydrolase domain; that stretch reads GYRANVGIIL…KRQVYRQALT (144 aa). A Nudix box motif is present at residues 38 to 59; it reads GGIKSGETPTEAMYRELAEETG. Residues 166–187 are disordered; that stretch reads AYREPLEPVEKNRKKSSDTRQS.

Belongs to the Nudix hydrolase family. RppH subfamily. It depends on a divalent metal cation as a cofactor.

Its function is as follows. Accelerates the degradation of transcripts by removing pyrophosphate from the 5'-end of triphosphorylated RNA, leading to a more labile monophosphorylated state that can stimulate subsequent ribonuclease cleavage. This Nitrosomonas europaea (strain ATCC 19718 / CIP 103999 / KCTC 2705 / NBRC 14298) protein is RNA pyrophosphohydrolase.